The sequence spans 334 residues: Anthranilate phosphoribosyltransferase (334 aa).

5-phospho-alpha-D-ribose 1-diphosphate is bound by residues glycine 81, 84-85, threonine 89, 91-94, 109-117, and alanine 121; these read GD, NIST, and KHGNRSVSS. Glycine 81 is a binding site for anthranilate. Serine 93 is a Mg(2+) binding site. Anthranilate is bound at residue asparagine 112. Arginine 167 contacts anthranilate. 2 residues coordinate Mg(2+): aspartate 225 and glutamate 226.

The protein belongs to the anthranilate phosphoribosyltransferase family. Homodimer. The cofactor is Mg(2+).

It catalyses the reaction N-(5-phospho-beta-D-ribosyl)anthranilate + diphosphate = 5-phospho-alpha-D-ribose 1-diphosphate + anthranilate. The protein operates within amino-acid biosynthesis; L-tryptophan biosynthesis; L-tryptophan from chorismate: step 2/5. Its function is as follows. Catalyzes the transfer of the phosphoribosyl group of 5-phosphorylribose-1-pyrophosphate (PRPP) to anthranilate to yield N-(5'-phosphoribosyl)-anthranilate (PRA). The protein is Anthranilate phosphoribosyltransferase of Histophilus somni (strain 2336) (Haemophilus somnus).